A 278-amino-acid chain; its full sequence is DNA adenine methylase (278 aa).

The S-adenosyl-L-methionine site is built by Trp-10, Lys-14, Asp-54, and Asp-181.

The protein belongs to the N(4)/N(6)-methyltransferase family.

The catalysed reaction is a 2'-deoxyadenosine in DNA + S-adenosyl-L-methionine = an N(6)-methyl-2'-deoxyadenosine in DNA + S-adenosyl-L-homocysteine + H(+). Functionally, an alpha subtype methylase, recognizes the double-stranded sequence 5'-GATC-3' and methylates A-2. May be involved in methyl-directed DNA mismatch repair, initiation of chromosome replication and gene expression. The sequence is that of DNA adenine methylase (dam) from Salmonella typhi.